We begin with the raw amino-acid sequence, 142 residues long: MAPKKKVTGLIKLQIQAGQANPAPPVGPALGQHGVNIMEFCKAYNAATESQRGNVIPVEITVYEDRSFTFALKTPPAAKLLLKAAGVQKGSGEPHKTKVAKVTWDQVREIAETKKSDLNANDIDQAAKIIAGTARSMGITVE.

It belongs to the universal ribosomal protein uL11 family. As to quaternary structure, part of the ribosomal stalk of the 50S ribosomal subunit. Interacts with L10 and the large rRNA to form the base of the stalk. L10 forms an elongated spine to which L12 dimers bind in a sequential fashion forming a multimeric L10(L12)X complex. In terms of processing, one or more lysine residues are methylated.

Its function is as follows. Forms part of the ribosomal stalk which helps the ribosome interact with GTP-bound translation factors. The polypeptide is Large ribosomal subunit protein uL11 (Mycobacterium sp. (strain MCS)).